Consider the following 1478-residue polypeptide: FYVE and coiled-coil domain-containing protein 1 (1478 aa).

The residue at position 2 (A2) is an N-acetylalanine. Positions 4 to 33 form a coiled coil; the sequence is TNAESQLQRIIRDLQDAVTELSKEFQEAGE. Residues 36–169 form the RUN domain; it reads TDDSTSLHKF…VQFDLASRGF (134 aa). S196 is subject to Phosphoserine. The stretch at 225–280 forms a coiled coil; the sequence is NNEALEGFDEMRLELDQLEVREKQLRERMQQLDRENQELRAAVSQQGEQLQTERER. At S342 the chain carries Phosphoserine. Phosphothreonine is present on T381. Coiled-coil stretches lie at residues 394–555 and 596–1151; these read SDAA…MLER and QEAQ…KDAL. Positions 586–613 are disordered; that stretch reads GKPEEEQRGLQEAQLDDTKVQEGSQEEE. At S878 the chain carries Phosphoserine. An FYVE-type zinc finger spans residues 1173–1231; the sequence is DTEANHCLDCKREFSWMVRRHHCRICGRIFCYYCCNNYVLSKHGGKKERCCRACFQKLS. Positions 1179, 1182, 1195, 1198, 1203, 1206, 1223, and 1226 each coordinate Zn(2+). Over residues 1231–1261 the composition is skewed to low complexity; that stretch reads SEGPGSPDSSGSGTSQGEPSPALSPASPGPQ. 2 disordered regions span residues 1231–1277 and 1294–1332; these read SEGP…PPDD and SGSS…DMPV. 2 stretches are compositionally biased toward polar residues: residues 1294–1305 and 1314–1324; these read SGSSLPETPTET and EQDTTSTSLTP. The GOLD domain maps to 1337–1466; it reads EICLLKSGEL…SKKVFYHLTV (130 aa).

Can form homodimers. Interacts (via C-terminus) with MAP1LC3B. Interacts with RAB7A; the interaction with RAB7A induces FYCO1 recruitment to late endosomal/lysosomal compartments. Interacts with MAP1LC3B. As to expression, expressed in heart and skeletal muscle.

Its subcellular location is the cytoplasmic vesicle. The protein resides in the autophagosome. It localises to the endosome. The protein localises to the lysosome. May mediate microtubule plus end-directed vesicle transport. The sequence is that of FYVE and coiled-coil domain-containing protein 1 (FYCO1) from Homo sapiens (Human).